Reading from the N-terminus, the 419-residue chain is Putative competence-damage inducible protein (419 aa).

This sequence belongs to the CinA family.

The chain is Putative competence-damage inducible protein from Lysinibacillus sphaericus (strain C3-41).